We begin with the raw amino-acid sequence, 264 residues long: 3-methyl-2-oxobutanoate hydroxymethyltransferase (264 aa).

Residues Asp45 and Asp84 each coordinate Mg(2+). 3-methyl-2-oxobutanoate is bound by residues 45–46, Asp84, and Lys112; that span reads DS. Glu114 contributes to the Mg(2+) binding site. Glu181 serves as the catalytic Proton acceptor.

It belongs to the PanB family. As to quaternary structure, homodecamer; pentamer of dimers. It depends on Mg(2+) as a cofactor.

It is found in the cytoplasm. The catalysed reaction is 3-methyl-2-oxobutanoate + (6R)-5,10-methylene-5,6,7,8-tetrahydrofolate + H2O = 2-dehydropantoate + (6S)-5,6,7,8-tetrahydrofolate. Its pathway is cofactor biosynthesis; (R)-pantothenate biosynthesis; (R)-pantoate from 3-methyl-2-oxobutanoate: step 1/2. In terms of biological role, catalyzes the reversible reaction in which hydroxymethyl group from 5,10-methylenetetrahydrofolate is transferred onto alpha-ketoisovalerate to form ketopantoate. The chain is 3-methyl-2-oxobutanoate hydroxymethyltransferase from Escherichia coli (strain 55989 / EAEC).